A 400-amino-acid chain; its full sequence is Phosphoglycerate kinase (400 aa).

Substrate is bound by residues 21–23 (DFN), Arg36, 59–62 (HCSR), Arg118, and Arg151. Residues Lys201, Glu323, and 353 to 356 (GGDT) each bind ATP.

It belongs to the phosphoglycerate kinase family. As to quaternary structure, monomer.

The protein resides in the cytoplasm. It catalyses the reaction (2R)-3-phosphoglycerate + ATP = (2R)-3-phospho-glyceroyl phosphate + ADP. It functions in the pathway carbohydrate degradation; glycolysis; pyruvate from D-glyceraldehyde 3-phosphate: step 2/5. This chain is Phosphoglycerate kinase, found in Bartonella bacilliformis (strain ATCC 35685 / KC583 / Herrer 020/F12,63).